The following is a 77-amino-acid chain: EMBRYO SURROUNDING FACTOR 1-like protein 9 (77 aa).

The signal sequence occupies residues 1 to 22; that stretch reads MSSSRFLILCIILISFFPLHEC. Intrachain disulfides connect Cys-38–Cys-54, Cys-43–Cys-75, Cys-52–Cys-71, and Cys-55–Cys-64.

This sequence belongs to the MEG family. As to expression, expressed in flowers.

The protein is EMBRYO SURROUNDING FACTOR 1-like protein 9 (ESFL9) of Arabidopsis thaliana (Mouse-ear cress).